We begin with the raw amino-acid sequence, 309 residues long: Tagatose-6-phosphate kinase (309 aa).

The protein belongs to the carbohydrate kinase PfkB family. LacC subfamily.

The enzyme catalyses D-tagatofuranose 6-phosphate + ATP = D-tagatofuranose 1,6-bisphosphate + ADP + H(+). It participates in carbohydrate metabolism; D-tagatose 6-phosphate degradation; D-glyceraldehyde 3-phosphate and glycerone phosphate from D-tagatose 6-phosphate: step 1/2. In Streptococcus pyogenes serotype M18 (strain MGAS8232), this protein is Tagatose-6-phosphate kinase.